A 904-amino-acid polypeptide reads, in one-letter code: Translation initiation factor IF-2 (904 aa).

3 disordered regions span residues 103 to 122, 137 to 252, and 267 to 315; these read YVKSENEGSGRAAPMTPDEE, NLEE…MVAG, and HLSA…FERP. Positions 137–177 are enriched in basic and acidic residues; it reads NLEEQQRLAESDRVRDEAIQRKREEEQAAKDRAEAERKAAE. 2 stretches are compositionally biased toward low complexity: residues 178 to 230 and 280 to 293; these read EAAA…AAPA and RGKPTGRPGSSSSR. Residues 403–572 form the tr-type G domain; that stretch reads SRPPVVTIMG…SLQAEVLELK (170 aa). The G1 stretch occupies residues 412-419; it reads GHVDHGKT. Residue 412 to 419 participates in GTP binding; that stretch reads GHVDHGKT. The tract at residues 437–441 is G2; that stretch reads GITQH. The G3 stretch occupies residues 458–461; the sequence is DTPG. GTP-binding positions include 458–462 and 512–515; these read DTPGH and NKID. The G4 stretch occupies residues 512–515; the sequence is NKID. Residues 548–550 are G5; that stretch reads SAK.

It belongs to the TRAFAC class translation factor GTPase superfamily. Classic translation factor GTPase family. IF-2 subfamily.

The protein localises to the cytoplasm. One of the essential components for the initiation of protein synthesis. Protects formylmethionyl-tRNA from spontaneous hydrolysis and promotes its binding to the 30S ribosomal subunits. Also involved in the hydrolysis of GTP during the formation of the 70S ribosomal complex. This is Translation initiation factor IF-2 from Xanthomonas euvesicatoria pv. vesicatoria (strain 85-10) (Xanthomonas campestris pv. vesicatoria).